Here is a 120-residue protein sequence, read N- to C-terminus: Large ribosomal subunit protein bL17 (120 aa).

The protein belongs to the bacterial ribosomal protein bL17 family. Part of the 50S ribosomal subunit. Contacts protein L32.

This is Large ribosomal subunit protein bL17 from Mesomycoplasma hyopneumoniae (strain J / ATCC 25934 / NCTC 10110) (Mycoplasma hyopneumoniae).